A 128-amino-acid polypeptide reads, in one-letter code: Protein SOB FIVE-LIKE 3 (128 aa).

Disordered regions lie at residues 1-26 and 54-128; these read MERE…EEEE and KDSD…HKKK. Over residues 8-18 the composition is skewed to polar residues; it reads SSESGWTTYIS. The SOFL-A signature appears at 11-16; that stretch reads SGWTTY. An SOFL-B motif is present at residues 59–68; the sequence is SMASDASSGP. A compositionally biased stretch (basic and acidic residues) spans 80–104; that stretch reads REGLALRNGKGESNDVYSHRIDDKN. Positions 111–118 match the Nuclear localization signal motif; sequence RKKEKKKS.

The protein belongs to the SOFL plant protein family. Expressed in seedlings, roots, flowers and siliques.

It localises to the cytoplasm. The protein resides in the nucleus. Its function is as follows. Involved in cytokinin-mediated development. This chain is Protein SOB FIVE-LIKE 3, found in Arabidopsis thaliana (Mouse-ear cress).